The sequence spans 700 residues: Mitogen-activated protein kinase 9 (700 aa).

In terms of domain architecture, Protein kinase spans 107–398; the sequence is YRIQEVIGKG…AEEALTDPYF (292 aa). ATP contacts are provided by residues 113-121 and lysine 136; that span reads IGKGSYGVV. The Proton acceptor role is filled by aspartate 233. Position 269 is a phosphothreonine (threonine 269). The TXY signature appears at 269-271; sequence TDY. Tyrosine 271 bears the Phosphotyrosine mark. Positions 475–523 are disordered; it reads EESNGSGSAIPMERKHASLPRSTTVHSTPIPPKEQPLAASLKSSRPVSD.

It belongs to the protein kinase superfamily. CMGC Ser/Thr protein kinase family. MAP kinase subfamily. Dually phosphorylated on Thr-269 and Tyr-271, which activates the enzyme.

It carries out the reaction L-seryl-[protein] + ATP = O-phospho-L-seryl-[protein] + ADP + H(+). It catalyses the reaction L-threonyl-[protein] + ATP = O-phospho-L-threonyl-[protein] + ADP + H(+). Its activity is regulated as follows. Activated by threonine and tyrosine phosphorylation. In Oryza sativa subsp. japonica (Rice), this protein is Mitogen-activated protein kinase 9 (MPK9).